The following is a 272-amino-acid chain: Deaminated glutathione amidase (272 aa).

Residues 1 to 253 (MKPYLAAALQ…PGLAIAEINP (253 aa)) form the CN hydrolase domain. The active-site Proton acceptor is glutamate 43. Lysine 115 functions as the Proton donor in the catalytic mechanism. The active-site Nucleophile is the cysteine 158.

This sequence belongs to the carbon-nitrogen hydrolase superfamily. NIT1/NIT2 family.

It carries out the reaction N-(4-oxoglutaryl)-L-cysteinylglycine + H2O = L-cysteinylglycine + 2-oxoglutarate. Its function is as follows. Hydrolyzes deaminated glutathione (dGSH, 2-oxoglutaramate) to alpha-ketoglutarate (alpha-KG) and cysteinylglycine (specific activity 7.77 umol/min/mg), hydrolyzes alpha-ketoglutaramate (a-KGM, specific activity 2.13 umol/min/mg), has no activity on glutathione or L-glutamine. May function as a metabolite repair enzyme. The chain is Deaminated glutathione amidase from Synechocystis sp. (strain PCC 6803 / GT-S).